A 368-amino-acid polypeptide reads, in one-letter code: Chaperone protein DnaJ (368 aa).

A J domain is found at 5–70; it reads DYYQVLGVPR…KKRKLYDTHG (66 aa). The segment at 124–201 adopts a CR-type zinc-finger fold; sequence GVERQIQIPT…CNGAGRVEDH (78 aa). The Zn(2+) site is built by C137, C140, C153, C156, C175, C178, C189, and C192. CXXCXGXG motif repeat units follow at residues 137–144, 153–160, 175–182, and 189–196; these read CTHCNGSG, CGTCRGSG, CPHCGGRG, and CKVCNGAG.

This sequence belongs to the DnaJ family. As to quaternary structure, homodimer. Zn(2+) serves as cofactor.

It localises to the cytoplasm. Functionally, participates actively in the response to hyperosmotic and heat shock by preventing the aggregation of stress-denatured proteins and by disaggregating proteins, also in an autonomous, DnaK-independent fashion. Unfolded proteins bind initially to DnaJ; upon interaction with the DnaJ-bound protein, DnaK hydrolyzes its bound ATP, resulting in the formation of a stable complex. GrpE releases ADP from DnaK; ATP binding to DnaK triggers the release of the substrate protein, thus completing the reaction cycle. Several rounds of ATP-dependent interactions between DnaJ, DnaK and GrpE are required for fully efficient folding. Also involved, together with DnaK and GrpE, in the DNA replication of plasmids through activation of initiation proteins. In Xylella fastidiosa (strain M12), this protein is Chaperone protein DnaJ.